Here is a 201-residue protein sequence, read N- to C-terminus: Holliday junction branch migration complex subunit RuvA (201 aa).

The interval 1 to 64 (MYEYIKGKYI…QDFIGLYGFL (64 aa)) is domain I. The tract at residues 65–143 (TKDELEMFNK…STDISKGNSE (79 aa)) is domain II. Positions 144 to 154 (INNLDVDYDEH) are flexible linker. The interval 154–201 (HSKKLEEVRFALNSLGYSEKETDRAINNVDKSEGIENIIKSCLRFLMN) is domain III.

The protein belongs to the RuvA family. Homotetramer. Forms an RuvA(8)-RuvB(12)-Holliday junction (HJ) complex. HJ DNA is sandwiched between 2 RuvA tetramers; dsDNA enters through RuvA and exits via RuvB. An RuvB hexamer assembles on each DNA strand where it exits the tetramer. Each RuvB hexamer is contacted by two RuvA subunits (via domain III) on 2 adjacent RuvB subunits; this complex drives branch migration. In the full resolvosome a probable DNA-RuvA(4)-RuvB(12)-RuvC(2) complex forms which resolves the HJ.

Its subcellular location is the cytoplasm. Its function is as follows. The RuvA-RuvB-RuvC complex processes Holliday junction (HJ) DNA during genetic recombination and DNA repair, while the RuvA-RuvB complex plays an important role in the rescue of blocked DNA replication forks via replication fork reversal (RFR). RuvA specifically binds to HJ cruciform DNA, conferring on it an open structure. The RuvB hexamer acts as an ATP-dependent pump, pulling dsDNA into and through the RuvAB complex. HJ branch migration allows RuvC to scan DNA until it finds its consensus sequence, where it cleaves and resolves the cruciform DNA. The polypeptide is Holliday junction branch migration complex subunit RuvA (Clostridium acetobutylicum (strain ATCC 824 / DSM 792 / JCM 1419 / IAM 19013 / LMG 5710 / NBRC 13948 / NRRL B-527 / VKM B-1787 / 2291 / W)).